We begin with the raw amino-acid sequence, 278 residues long: Putative pyruvate, phosphate dikinase regulatory protein (278 aa).

Gly149 to Thr156 lines the ADP pocket.

The protein belongs to the pyruvate, phosphate/water dikinase regulatory protein family. PDRP subfamily.

It catalyses the reaction N(tele)-phospho-L-histidyl/L-threonyl-[pyruvate, phosphate dikinase] + ADP = N(tele)-phospho-L-histidyl/O-phospho-L-threonyl-[pyruvate, phosphate dikinase] + AMP + H(+). The catalysed reaction is N(tele)-phospho-L-histidyl/O-phospho-L-threonyl-[pyruvate, phosphate dikinase] + phosphate + H(+) = N(tele)-phospho-L-histidyl/L-threonyl-[pyruvate, phosphate dikinase] + diphosphate. Bifunctional serine/threonine kinase and phosphorylase involved in the regulation of the pyruvate, phosphate dikinase (PPDK) by catalyzing its phosphorylation/dephosphorylation. The sequence is that of Putative pyruvate, phosphate dikinase regulatory protein from Erythrobacter litoralis (strain HTCC2594).